Reading from the N-terminus, the 527-residue chain is Arginine--tRNA ligase (527 aa).

Residues 112–122 carry the 'HIGH' region motif; that stretch reads ANPTGPLHIGH.

Belongs to the class-I aminoacyl-tRNA synthetase family. In terms of assembly, monomer.

It is found in the cytoplasm. It catalyses the reaction tRNA(Arg) + L-arginine + ATP = L-arginyl-tRNA(Arg) + AMP + diphosphate. This Nitratiruptor sp. (strain SB155-2) protein is Arginine--tRNA ligase.